The following is a 262-amino-acid chain: Methionine-rich nacre protein (262 aa).

The first 22 residues, 1–22, serve as a signal peptide directing secretion; it reads MSIMRRILCLAVVIFIINDVSS. Positions 26–35 are enriched in low complexity; the sequence is GNNKNWKKNG. The segment at 26 to 84 is disordered; it reads GNNKNWKKNGMSLSSPGNKKPTGNNAVPQKSKMNNMNQNSLSQPKRSSPPGNSMYNMAN. The span at 36-84 shows a compositional bias: polar residues; sequence MSLSSPGNKKPTGNNAVPQKSKMNNMNQNSLSQPKRSSPPGNSMYNMAN.

In terms of tissue distribution, expressed in mantle and, after secretion, incorporated into acid-insoluble nacre matrix of the shell (at protein level). Expressed primarily in the mantle with highest level in the mantle pallium and lower level in the mantle edge.

Its subcellular location is the secreted. This Pinctada maxima (Silver-lipped pearl oyster) protein is Methionine-rich nacre protein.